The chain runs to 262 residues: Ornithine carbamoyltransferase (262 aa).

Carbamoyl phosphate is bound by residues 3 to 7, Gln30, Arg54, and 81 to 84; these read STRTR and HPTQ. L-ornithine contacts are provided by residues Asn114, Asp178, and 182-183; that span reads SM. Carbamoyl phosphate-binding positions include 219 to 222 and Thr247; that span reads HCLP.

It belongs to the aspartate/ornithine carbamoyltransferase superfamily. OTCase family.

The protein localises to the cytoplasm. The catalysed reaction is carbamoyl phosphate + L-ornithine = L-citrulline + phosphate + H(+). It functions in the pathway amino-acid biosynthesis; L-arginine biosynthesis; L-arginine from L-ornithine and carbamoyl phosphate: step 1/3. Reversibly catalyzes the transfer of the carbamoyl group from carbamoyl phosphate (CP) to the N(epsilon) atom of ornithine (ORN) to produce L-citrulline. This is Ornithine carbamoyltransferase (argF) from Neisseria mucosa.